The chain runs to 362 residues: UDP-N-acetylglucosamine--N-acetylmuramyl-(pentapeptide) pyrophosphoryl-undecaprenol N-acetylglucosamine transferase (362 aa).

UDP-N-acetyl-alpha-D-glucosamine-binding positions include 14 to 16, Arg170, Ser199, and Gln289; that span reads TGG.

The protein belongs to the glycosyltransferase 28 family. MurG subfamily.

Its subcellular location is the cell inner membrane. It carries out the reaction di-trans,octa-cis-undecaprenyl diphospho-N-acetyl-alpha-D-muramoyl-L-alanyl-D-glutamyl-meso-2,6-diaminopimeloyl-D-alanyl-D-alanine + UDP-N-acetyl-alpha-D-glucosamine = di-trans,octa-cis-undecaprenyl diphospho-[N-acetyl-alpha-D-glucosaminyl-(1-&gt;4)]-N-acetyl-alpha-D-muramoyl-L-alanyl-D-glutamyl-meso-2,6-diaminopimeloyl-D-alanyl-D-alanine + UDP + H(+). The protein operates within cell wall biogenesis; peptidoglycan biosynthesis. Functionally, cell wall formation. Catalyzes the transfer of a GlcNAc subunit on undecaprenyl-pyrophosphoryl-MurNAc-pentapeptide (lipid intermediate I) to form undecaprenyl-pyrophosphoryl-MurNAc-(pentapeptide)GlcNAc (lipid intermediate II). The polypeptide is UDP-N-acetylglucosamine--N-acetylmuramyl-(pentapeptide) pyrophosphoryl-undecaprenol N-acetylglucosamine transferase (Borrelia hermsii (strain HS1 / DAH)).